Here is a 92-residue protein sequence, read N- to C-terminus: Small ribosomal subunit protein uS19c (92 aa).

The protein belongs to the universal ribosomal protein uS19 family.

It localises to the plastid. Its subcellular location is the chloroplast. Functionally, protein S19 forms a complex with S13 that binds strongly to the 16S ribosomal RNA. This Rhodomonas salina (Cryptomonas salina) protein is Small ribosomal subunit protein uS19c.